A 110-amino-acid chain; its full sequence is Ribonuclease H2 subunit C (110 aa).

A disordered region spans residues 45 to 69 (LKREKSATPSSSDNTTSNTFSNGAI). Over residues 51–66 (ATPSSSDNTTSNTFSN) the composition is skewed to low complexity.

The protein belongs to the RNase H2 subunit C family. Highly divergent. In terms of assembly, the RNase 2 complex is a heterotrimer composed of the catalytic subunit RNH201 and of the non-catalytic subunits RNH202 and RNH203.

It localises to the cytoplasm. The protein resides in the nucleus. Its function is as follows. Non catalytic subunit of RNase H2, an endonuclease that specifically degrades the RNA of RNA:DNA hybrids. Participates in DNA replication, possibly by mediating the removal of lagging-strand Okazaki fragment RNA primers during DNA replication. Mediates the excision of single ribonucleotides from DNA:RNA duplexes. The sequence is that of Ribonuclease H2 subunit C (RNH203) from Saccharomyces cerevisiae (strain ATCC 204508 / S288c) (Baker's yeast).